A 529-amino-acid chain; its full sequence is Low affinity inorganic phosphate transporter 4 (529 aa).

Residues 1–21 (MASDNLVVLNALDTARTQWYH) are Cytoplasmic-facing. A helical membrane pass occupies residues 22–42 (VTAVIIAGMGFFTDAYDLFCI). Over 43-71 (STVSKLLGRLYYYDPSTKAPGKLPHMANN) the chain is Extracellular. Residues 72–92 (WVIGVALVGTLSGQLVFGWLG) form a helical membrane-spanning segment. The Cytoplasmic segment spans residues 93–99 (DKLGRKK). The chain crosses the membrane as a helical span at residues 100–120 (VYGLTLILMVICALCSGLSLG). At 121 to 125 (YSPKS) the chain is on the extracellular side. The helical transmembrane segment at 126-146 (VIGTLCFFRFWLGFGIGGDYP) threads the bilayer. The Cytoplasmic segment spans residues 147-161 (LSATIMSEYANKSTR). The chain crosses the membrane as a helical span at residues 162–182 (GAFIAAVFAMQGVGIIFAGLV). The Extracellular segment spans residues 183–211 (SMTISKVFLMNFEGKPFNVDEVLSTEPEA). The helical transmembrane segment at 212-232 (DYVWRIVLMLGALPALLTYYW) threads the bilayer. At 233-291 (RMKMPETGRYTAIIEGNAKQAAIDMGKVLDIEIQAEGDKLAQFKAANEYSLLSNEFFQR) the chain is on the cytoplasmic side. A helical transmembrane segment spans residues 292–312 (HGLHLIGTMSTWFLLDIAFYS). Topologically, residues 313–344 (QNLTQKDIFPVMGLTSKANTISALREMFETSR) are extracellular. Asn314 carries N-linked (GlcNAc...) asparagine glycosylation. A helical membrane pass occupies residues 345 to 365 (AMFVIALFGTFPGYWFTVFFI). Residues 366–374 (EKIGRFKIQ) are Cytoplasmic-facing. A helical membrane pass occupies residues 375 to 395 (LVGFFMMSVFMAIIGVKYDYL). Topologically, residues 396–405 (RNKEHKWTFA) are extracellular. The helical transmembrane segment at 406-426 (ALYGLTFFFANFGPNSTTFVL) threads the bilayer. Residues 427–437 (PAELFPTRVRS) lie on the Cytoplasmic side of the membrane. Residues 438–458 (TCHALSAALGKAGAMISAFGI) traverse the membrane as a helical segment. Residues 459–471 (QQYTQDQDVRKIK) lie on the Extracellular side of the membrane. The helical transmembrane segment at 472–492 (TAMLLLAFTNMVGFCCTFLVT) threads the bilayer. At 493 to 529 (ETKGRSLEEISGEDGRQNETQMKTTRPVSGHPDDGWE) the chain is on the cytoplasmic side. The interval 501–529 (EISGEDGRQNETQMKTTRPVSGHPDDGWE) is disordered. Residues 510 to 519 (NETQMKTTRP) are compositionally biased toward polar residues.

The protein belongs to the major facilitator superfamily. Phosphate:H(+) symporter (TC 2.A.1.9) family.

It localises to the cell membrane. It catalyses the reaction phosphate(in) + H(+)(in) = phosphate(out) + H(+)(out). Low-affinity transporter for external inorganic phosphate (Pi) probably involved in the acquisition of phosphate released by arbuscular mycorrhizal (AM) fungi (e.g. Rhizophagus irregularis and Glomus intraradices) during AM symbiosis. Acts as a Pi-sensing machinery at the root tip level, independently of AM fungi, involved in the regulation of early root branching and lateral roots formation. The chain is Low affinity inorganic phosphate transporter 4 from Petunia hybrida (Petunia).